The primary structure comprises 521 residues: Bifunctional purine biosynthesis protein PurH (521 aa).

The region spanning 1 to 145 is the MGS-like domain; the sequence is MIKQALISVS…KNHRDVTVVV (145 aa).

It belongs to the PurH family.

The enzyme catalyses (6R)-10-formyltetrahydrofolate + 5-amino-1-(5-phospho-beta-D-ribosyl)imidazole-4-carboxamide = 5-formamido-1-(5-phospho-D-ribosyl)imidazole-4-carboxamide + (6S)-5,6,7,8-tetrahydrofolate. It carries out the reaction IMP + H2O = 5-formamido-1-(5-phospho-D-ribosyl)imidazole-4-carboxamide. It functions in the pathway purine metabolism; IMP biosynthesis via de novo pathway; 5-formamido-1-(5-phospho-D-ribosyl)imidazole-4-carboxamide from 5-amino-1-(5-phospho-D-ribosyl)imidazole-4-carboxamide (10-formyl THF route): step 1/1. The protein operates within purine metabolism; IMP biosynthesis via de novo pathway; IMP from 5-formamido-1-(5-phospho-D-ribosyl)imidazole-4-carboxamide: step 1/1. This is Bifunctional purine biosynthesis protein PurH from Burkholderia pseudomallei (strain 1106a).